Consider the following 72-residue polypeptide: Lantibiotic Flvbeta.g (72 aa).

Residues 1–34 (MNNNNFDMEKFKKLAAIVSEGEIDEMLDETTVGA) constitute a propeptide, cleaved by FlvT. The lanthionine (Ser-Cys); by FlvM2 cross-link spans 36-40 (STLPC). 3 positions are modified to 2,3-didehydrobutyrine; by FlvM2: Thr-37, Thr-46, and Thr-48. 3 consecutive cross-links (beta-methyllanthionine (Thr-Cys); by FlvM2) follow at residues 55–61 (TTGFDWC), 63–66 (TGAC), and 67–70 (THSC).

Contains LL-lanthionine and DL-beta-methyllanthionine, when coepressed in E.coli with the flavecin synthetase FlvM2.

Its subcellular location is the secreted. In terms of biological role, lanthionine-containing peptide antibiotic (lantibiotic) that is probably weakly active on Gram-positive bacteria, since its analog [Del1]Flvbeta.g shows weak antibacterial activity against M.luteus. This activity is synergistically enhanced by [Del2]Flvalpha.a, an analog of Flvalpha.a, which is encoded by the same operon than Flvbeta.g. The bactericidal activity of lantibiotics is based on depolarization of energized bacterial cytoplasmic membranes, initiated by the formation of aqueous transmembrane pores. This is Lantibiotic Flvbeta.g from Ruminococcus flavefaciens.